The primary structure comprises 549 residues: Glucose-6-phosphate isomerase (549 aa).

The active-site Proton donor is the Glu355. Active-site residues include His386 and Lys514.

This sequence belongs to the GPI family.

It localises to the cytoplasm. The catalysed reaction is alpha-D-glucose 6-phosphate = beta-D-fructose 6-phosphate. The protein operates within carbohydrate biosynthesis; gluconeogenesis. It functions in the pathway carbohydrate degradation; glycolysis; D-glyceraldehyde 3-phosphate and glycerone phosphate from D-glucose: step 2/4. Its function is as follows. Catalyzes the reversible isomerization of glucose-6-phosphate to fructose-6-phosphate. The polypeptide is Glucose-6-phosphate isomerase (Salmonella paratyphi B (strain ATCC BAA-1250 / SPB7)).